The following is a 208-amino-acid chain: Uracil phosphoribosyltransferase (208 aa).

Residues R78, R103, and 130–138 contribute to the 5-phospho-alpha-D-ribose 1-diphosphate site; that span reads DPMLATGGS. Uracil-binding positions include I193 and 198 to 200; that span reads GDA. D199 lines the 5-phospho-alpha-D-ribose 1-diphosphate pocket.

Belongs to the UPRTase family. The cofactor is Mg(2+).

It catalyses the reaction UMP + diphosphate = 5-phospho-alpha-D-ribose 1-diphosphate + uracil. It participates in pyrimidine metabolism; UMP biosynthesis via salvage pathway; UMP from uracil: step 1/1. With respect to regulation, allosterically activated by GTP. Its function is as follows. Catalyzes the conversion of uracil and 5-phospho-alpha-D-ribose 1-diphosphate (PRPP) to UMP and diphosphate. This chain is Uracil phosphoribosyltransferase, found in Roseiflexus sp. (strain RS-1).